A 141-amino-acid polypeptide reads, in one-letter code: ATP synthase epsilon chain (141 aa).

It belongs to the ATPase epsilon chain family. F-type ATPases have 2 components, CF(1) - the catalytic core - and CF(0) - the membrane proton channel. CF(1) has five subunits: alpha(3), beta(3), gamma(1), delta(1), epsilon(1). CF(0) has three main subunits: a, b and c.

It localises to the cell inner membrane. Its function is as follows. Produces ATP from ADP in the presence of a proton gradient across the membrane. In Aromatoleum aromaticum (strain DSM 19018 / LMG 30748 / EbN1) (Azoarcus sp. (strain EbN1)), this protein is ATP synthase epsilon chain.